The sequence spans 468 residues: Glutamate--tRNA ligase (468 aa).

Positions 10 to 20 (PSPTGDLHIGG) match the 'HIGH' region motif. 4 residues coordinate Zn(2+): cysteine 99, cysteine 101, cysteine 126, and aspartate 128. The 'KMSKS' region signature appears at 236-240 (RLSKR). Lysine 239 contributes to the ATP binding site.

It belongs to the class-I aminoacyl-tRNA synthetase family. Glutamate--tRNA ligase type 1 subfamily. As to quaternary structure, monomer. Requires Zn(2+) as cofactor.

The protein localises to the cytoplasm. The enzyme catalyses tRNA(Glu) + L-glutamate + ATP = L-glutamyl-tRNA(Glu) + AMP + diphosphate. Catalyzes the attachment of glutamate to tRNA(Glu) in a two-step reaction: glutamate is first activated by ATP to form Glu-AMP and then transferred to the acceptor end of tRNA(Glu). This Syntrophobacter fumaroxidans (strain DSM 10017 / MPOB) protein is Glutamate--tRNA ligase.